A 61-amino-acid chain; its full sequence is Small ribosomal subunit protein uS14 (61 aa).

Residues Cys24, Cys27, Cys40, and Cys43 each coordinate Zn(2+).

This sequence belongs to the universal ribosomal protein uS14 family. Zinc-binding uS14 subfamily. Part of the 30S ribosomal subunit. Contacts proteins S3 and S10. Requires Zn(2+) as cofactor.

Its function is as follows. Binds 16S rRNA, required for the assembly of 30S particles and may also be responsible for determining the conformation of the 16S rRNA at the A site. In Geotalea daltonii (strain DSM 22248 / JCM 15807 / FRC-32) (Geobacter daltonii), this protein is Small ribosomal subunit protein uS14.